A 904-amino-acid chain; its full sequence is Protein translocase subunit SecA (904 aa).

ATP is bound by residues Gln87, 105–109, and Asp512; that span reads GEGKT. Residues 851 to 870 are disordered; the sequence is LARQQQLSHQTDNSALMSEE. Residues Cys888, Cys890, Cys899, and His900 each coordinate Zn(2+).

The protein belongs to the SecA family. In terms of assembly, monomer and homodimer. Part of the essential Sec protein translocation apparatus which comprises SecA, SecYEG and auxiliary proteins SecDF-YajC and YidC. Zn(2+) is required as a cofactor.

It localises to the cell inner membrane. The protein localises to the cytoplasm. It catalyses the reaction ATP + H2O + cellular proteinSide 1 = ADP + phosphate + cellular proteinSide 2.. In terms of biological role, part of the Sec protein translocase complex. Interacts with the SecYEG preprotein conducting channel. Has a central role in coupling the hydrolysis of ATP to the transfer of proteins into and across the cell membrane, serving both as a receptor for the preprotein-SecB complex and as an ATP-driven molecular motor driving the stepwise translocation of polypeptide chains across the membrane. This is Protein translocase subunit SecA from Yersinia pseudotuberculosis serotype O:1b (strain IP 31758).